The primary structure comprises 194 residues: Peptidyl-tRNA hydrolase (194 aa).

Tyr-16 serves as a coordination point for tRNA. The Proton acceptor role is filled by His-21. Residues Tyr-67, Asn-69, and Asn-115 each coordinate tRNA.

This sequence belongs to the PTH family. Monomer.

It localises to the cytoplasm. It catalyses the reaction an N-acyl-L-alpha-aminoacyl-tRNA + H2O = an N-acyl-L-amino acid + a tRNA + H(+). Its function is as follows. Hydrolyzes ribosome-free peptidyl-tRNAs (with 1 or more amino acids incorporated), which drop off the ribosome during protein synthesis, or as a result of ribosome stalling. In terms of biological role, catalyzes the release of premature peptidyl moieties from peptidyl-tRNA molecules trapped in stalled 50S ribosomal subunits, and thus maintains levels of free tRNAs and 50S ribosomes. The sequence is that of Peptidyl-tRNA hydrolase from Synechocystis sp. (strain ATCC 27184 / PCC 6803 / Kazusa).